We begin with the raw amino-acid sequence, 135 residues long: Insoluble matrix shell protein 5 (135 aa).

Positions 1-16 (MILVVTLACLIAVVCC) are cleaved as a signal peptide. EF-hand domains lie at 21 to 56 (TDQG…ADLN) and 93 to 128 (IEFV…TVRP). 10 residues coordinate Ca(2+): D34, D36, N38, K40, E45, D106, N108, D110, E112, and E117.

In terms of tissue distribution, component of the acid-insoluble organic matrix of the calcified shell.

Its subcellular location is the secreted. The protein is Insoluble matrix shell protein 5 of Ruditapes philippinarum (Japanese carpet shell).